Here is a 119-residue protein sequence, read N- to C-terminus: NADH-quinone oxidoreductase subunit A (119 aa).

The next 3 helical transmembrane spans lie at 9–29 (IFLF…LGYI), 63–83 (LVAI…PWAV), and 88–108 (IGAL…VGFI).

This sequence belongs to the complex I subunit 3 family. NDH-1 is composed of 14 different subunits. Subunits NuoA, H, J, K, L, M, N constitute the membrane sector of the complex.

Its subcellular location is the cell inner membrane. The enzyme catalyses a quinone + NADH + 5 H(+)(in) = a quinol + NAD(+) + 4 H(+)(out). NDH-1 shuttles electrons from NADH, via FMN and iron-sulfur (Fe-S) centers, to quinones in the respiratory chain. The immediate electron acceptor for the enzyme in this species is believed to be ubiquinone. Couples the redox reaction to proton translocation (for every two electrons transferred, four hydrogen ions are translocated across the cytoplasmic membrane), and thus conserves the redox energy in a proton gradient. The sequence is that of NADH-quinone oxidoreductase subunit A from Albidiferax ferrireducens (strain ATCC BAA-621 / DSM 15236 / T118) (Rhodoferax ferrireducens).